A 938-amino-acid polypeptide reads, in one-letter code: Isoleucine--tRNA ligase (938 aa).

Residues 58-68 (PYANGSIHIGH) carry the 'HIGH' region motif. Glutamate 561 provides a ligand contact to L-isoleucyl-5'-AMP. Residues 602-606 (KMSKS) carry the 'KMSKS' region motif. Lysine 605 provides a ligand contact to ATP. Cysteine 901, cysteine 904, cysteine 921, and cysteine 924 together coordinate Zn(2+).

This sequence belongs to the class-I aminoacyl-tRNA synthetase family. IleS type 1 subfamily. In terms of assembly, monomer. It depends on Zn(2+) as a cofactor.

It is found in the cytoplasm. It catalyses the reaction tRNA(Ile) + L-isoleucine + ATP = L-isoleucyl-tRNA(Ile) + AMP + diphosphate. Its function is as follows. Catalyzes the attachment of isoleucine to tRNA(Ile). As IleRS can inadvertently accommodate and process structurally similar amino acids such as valine, to avoid such errors it has two additional distinct tRNA(Ile)-dependent editing activities. One activity is designated as 'pretransfer' editing and involves the hydrolysis of activated Val-AMP. The other activity is designated 'posttransfer' editing and involves deacylation of mischarged Val-tRNA(Ile). The sequence is that of Isoleucine--tRNA ligase from Erwinia tasmaniensis (strain DSM 17950 / CFBP 7177 / CIP 109463 / NCPPB 4357 / Et1/99).